The following is a 160-amino-acid chain: Type IV major fimbrial protein FimA (160 aa).

The propeptide at 1–7 (MKSLQKG) is leader sequence. Phe-8 carries the N-methylphenylalanine modification. The chain crosses the membrane as a helical span at residues 8-28 (FTLIELMIVVAIIGILAAFAI). Cysteines 63 and 105 form a disulfide.

It belongs to the N-Me-Phe pilin family. The pili are polar flexible filaments of about 5.4 nanometers diameter and 2.5 micrometers average length; they consist of only a single polypeptide chain arranged in a helical configuration of five subunits per turn in the assembled pilus.

The protein resides in the fimbrium. Its subcellular location is the membrane. Functionally, major component of the type IV fimbriae that plays an essential role in twitching motility, natural transformation, and protease secretion. In Dichelobacter nodosus (Bacteroides nodosus), this protein is Type IV major fimbrial protein FimA (fimA).